Here is a 150-residue protein sequence, read N- to C-terminus: Profilin (150 aa).

It belongs to the profilin family. Occurs in many kinds of cells as a complex with monomeric actin in a 1:1 ratio.

Its subcellular location is the cytoplasm. It localises to the cytoskeleton. Binds to actin and affects the structure of the cytoskeleton. At high concentrations, profilin prevents the polymerization of actin, whereas it enhances it at low concentrations. By binding to PIP2, it inhibits the formation of IP3 and DG. The protein is Profilin of Trypanosoma brucei brucei.